A 76-amino-acid chain; its full sequence is Small ribosomal subunit protein bS16c (76 aa).

This sequence belongs to the bacterial ribosomal protein bS16 family.

It localises to the plastid. The protein resides in the chloroplast. This chain is Small ribosomal subunit protein bS16c, found in Guillardia theta (Cryptophyte).